A 149-amino-acid polypeptide reads, in one-letter code: SPbeta prophage-derived putative transcriptional regulator YosT (149 aa).

This Bacillus subtilis (strain 168) protein is SPbeta prophage-derived putative transcriptional regulator YosT (yosT).